The chain runs to 331 residues: DSC E3 ubiquitin ligase complex subunit D (331 aa).

The N-linked (GlcNAc...) asparagine glycan is linked to N26. The next 3 helical transmembrane spans lie at 63–83 (ILIY…ILFA), 107–127 (PFIG…NFFT), and 159–179 (LFLL…LIVE). The disordered stretch occupies residues 188-225 (STTSTEILRVQDHDSEERGVHRTRPESRSSVVGAELDE). Basic and acidic residues predominate over residues 196–214 (RVQDHDSEERGVHRTRPES).

As to quaternary structure, component of the DSC E3 ubiquitin ligase complex composed of dscA, dscB, dscC and dscD.

The protein localises to the endoplasmic reticulum membrane. It participates in protein modification; protein ubiquitination. Its function is as follows. Component of the DSC E3 ubiquitin ligase complex which is required for the srbA transcriptional activator proteolytic cleavage to release the soluble transcription factor from the membrane in low oxygen or sterol conditions. Required for growth during hypoxia and triazole drug susceptibility, as well as for virulence in a murine model of invasive pulmonary aspergillosis (IPA). The protein is DSC E3 ubiquitin ligase complex subunit D of Aspergillus fumigatus (strain ATCC MYA-4609 / CBS 101355 / FGSC A1100 / Af293) (Neosartorya fumigata).